Consider the following 374-residue polypeptide: Hydroxylysine kinase (374 aa).

Catalysis depends on D228, which acts as the Proton acceptor.

Belongs to the aminoglycoside phosphotransferase family.

The protein localises to the cytoplasm. The catalysed reaction is (5R)-5-hydroxy-L-lysine + GTP = (5R)-5-phosphooxy-L-lysine + GDP + H(+). Catalyzes the GTP-dependent phosphorylation of 5-hydroxy-L-lysine. The protein is Hydroxylysine kinase (hykk) of Xenopus laevis (African clawed frog).